The sequence spans 193 residues: Spermatogenesis-associated protein 3 (193 aa).

Basic residues predominate over residues 1–16 (MKKVKKKKSDSRRRRN). The tract at residues 1 to 92 (MKKVKKKKSD…SPFLVPMEPK (92 aa)) is disordered. A compositionally biased stretch (low complexity) spans 17-35 (SISPQTSSDSSQQPSSETP). Positions 36 to 48 (PSCPEPASPPSKP) are enriched in pro residues.

As to expression, strongly expressed in testis. Faintly expressed in epididymis, ovary, spleen, kidney, lung, heart, brain, epididymis, liver and skeletal muscle.

It localises to the cell projection. The protein localises to the cilium. The protein resides in the flagellum. This Mus musculus (Mouse) protein is Spermatogenesis-associated protein 3 (Spata3).